We begin with the raw amino-acid sequence, 171 residues long: CDP-archaeol synthase (171 aa).

5 helical membrane-spanning segments follow: residues 7 to 27 (IFWA…PVLV), 54 to 74 (GFIG…FITP), 84 to 104 (VKLA…GSFI), 115 to 135 (PAIG…AYPV), and 141 to 161 (GQII…NYFA).

The protein belongs to the CDP-archaeol synthase family. Mg(2+) serves as cofactor.

Its subcellular location is the cell membrane. The catalysed reaction is 2,3-bis-O-(geranylgeranyl)-sn-glycerol 1-phosphate + CTP + H(+) = CDP-2,3-bis-O-(geranylgeranyl)-sn-glycerol + diphosphate. Its pathway is membrane lipid metabolism; glycerophospholipid metabolism. In terms of biological role, catalyzes the formation of CDP-2,3-bis-(O-geranylgeranyl)-sn-glycerol (CDP-archaeol) from 2,3-bis-(O-geranylgeranyl)-sn-glycerol 1-phosphate (DGGGP) and CTP. This reaction is the third ether-bond-formation step in the biosynthesis of archaeal membrane lipids. This is CDP-archaeol synthase from Thermococcus kodakarensis (strain ATCC BAA-918 / JCM 12380 / KOD1) (Pyrococcus kodakaraensis (strain KOD1)).